Reading from the N-terminus, the 699-residue chain is Chitinase A1 (699 aa).

An N-terminal signal peptide occupies residues 1 to 41; it reads MINLNKHTAFKKTAKFFLGLSLLLSVIVPSFALQPATAEAA. The GH18 domain occupies 44-454; it reads YKIVGYYPSW…NKLKADLPTG (411 aa). Residues 135–136 and 162–165 contribute to the chitin site; these read DQ and GGWT. Glutamate 204 (proton donor) is an active-site residue. Chitin is bound by residues tyrosine 205, 277 to 280, and tryptophan 433; that span reads MTYD. The interval 449–471 is disordered; that stretch reads ADLPTGGTVPPVDTTAPSVPGNA. Positions 452 to 465 are enriched in low complexity; that stretch reads PTGGTVPPVDTTAP. 2 consecutive Fibronectin type-III domains span residues 467–553 and 562–647; these read VPGN…TAQP and APTN…TAAE.

It belongs to the glycosyl hydrolase 18 family. Chitinase class II subfamily.

It catalyses the reaction Random endo-hydrolysis of N-acetyl-beta-D-glucosaminide (1-&gt;4)-beta-linkages in chitin and chitodextrins.. This chain is Chitinase A1 (chiA1), found in Niallia circulans (Bacillus circulans).